The following is a 372-amino-acid chain: Alanine racemase (372 aa).

K37 serves as the catalytic Proton acceptor; specific for D-alanine. K37 carries the N6-(pyridoxal phosphate)lysine modification. R136 is a binding site for substrate. Y265 functions as the Proton acceptor; specific for L-alanine in the catalytic mechanism. Residue M313 participates in substrate binding.

The protein belongs to the alanine racemase family. Pyridoxal 5'-phosphate serves as cofactor.

It carries out the reaction L-alanine = D-alanine. The protein operates within amino-acid biosynthesis; D-alanine biosynthesis; D-alanine from L-alanine: step 1/1. In terms of biological role, catalyzes the interconversion of L-alanine and D-alanine. May also act on other amino acids. In Synechocystis sp. (strain ATCC 27184 / PCC 6803 / Kazusa), this protein is Alanine racemase (alr).